A 445-amino-acid polypeptide reads, in one-letter code: Tubulin beta-4B chain (445 aa).

Positions 1 to 4 (MREI) match the MREI motif motif. Q11 contributes to the GTP binding site. A Phosphothreonine modification is found at T55. K58 carries the N6-acetyllysine modification. GTP contacts are provided by E69, S138, G142, T143, and G144. E69 contributes to the Mg(2+) binding site. The residue at position 172 (S172) is a Phosphoserine; by CDK1. Positions 204 and 226 each coordinate GTP. Residues 426 to 445 (QDATAEEEGEFEEEAEEEVA) are disordered. A compositionally biased stretch (acidic residues) spans 429–445 (TAEEEGEFEEEAEEEVA). Residue E438 is modified to 5-glutamyl polyglutamate.

The protein belongs to the tubulin family. Dimer of alpha and beta chains. A typical microtubule is a hollow water-filled tube with an outer diameter of 25 nm and an inner diameter of 15 nM. Alpha-beta heterodimers associate head-to-tail to form protofilaments running lengthwise along the microtubule wall with the beta-tubulin subunit facing the microtubule plus end conferring a structural polarity. Microtubules usually have 13 protofilaments but different protofilament numbers can be found in some organisms and specialized cells. Component of sperm flagellar doublet microtubules. Mg(2+) is required as a cofactor. Some glutamate residues at the C-terminus are polyglycylated, resulting in polyglycine chains on the gamma-carboxyl group. Glycylation is mainly limited to tubulin incorporated into axonemes (cilia and flagella) whereas glutamylation is prevalent in neuronal cells, centrioles, axonemes, and the mitotic spindle. Both modifications can coexist on the same protein on adjacent residues, and lowering polyglycylation levels increases polyglutamylation, and reciprocally. Cilia and flagella glycylation is required for their stability and maintenance. Flagella glycylation controls sperm motility. Post-translationally, some glutamate residues at the C-terminus are polyglutamylated, resulting in polyglutamate chains on the gamma-carboxyl group. Polyglutamylation plays a key role in microtubule severing by spastin (SPAST). SPAST preferentially recognizes and acts on microtubules decorated with short polyglutamate tails: severing activity by SPAST increases as the number of glutamates per tubulin rises from one to eight, but decreases beyond this glutamylation threshold. Glutamylation is also involved in cilia motility. In terms of processing, phosphorylated on Ser-172 by CDK1 during the cell cycle, from metaphase to telophase, but not in interphase. This phosphorylation inhibits tubulin incorporation into microtubules.

It is found in the cytoplasm. Its subcellular location is the cytoskeleton. The protein resides in the flagellum axoneme. Its function is as follows. Tubulin is the major constituent of microtubules, a cylinder consisting of laterally associated linear protofilaments composed of alpha- and beta-tubulin heterodimers. Microtubules grow by the addition of GTP-tubulin dimers to the microtubule end, where a stabilizing cap forms. Below the cap, tubulin dimers are in GDP-bound state, owing to GTPase activity of alpha-tubulin. The protein is Tubulin beta-4B chain (Tubb4b) of Rattus norvegicus (Rat).